The primary structure comprises 428 residues: Chaperone SurA (428 aa).

Residues 1-20 (MKNWKTLLLGIAMIANTSFA) form the signal peptide. PpiC domains follow at residues 171–272 (STEL…KVND) and 282–382 (VTEV…ELLD).

It localises to the periplasm. It catalyses the reaction [protein]-peptidylproline (omega=180) = [protein]-peptidylproline (omega=0). In terms of biological role, chaperone involved in the correct folding and assembly of outer membrane proteins. Recognizes specific patterns of aromatic residues and the orientation of their side chains, which are found more frequently in integral outer membrane proteins. May act in both early periplasmic and late outer membrane-associated steps of protein maturation. In Shigella dysenteriae serotype 1 (strain Sd197), this protein is Chaperone SurA.